A 309-amino-acid polypeptide reads, in one-letter code: Manganese ABC transporter substrate-binding lipoprotein PsaA (309 aa).

The signal sequence occupies residues 1–19; it reads MKKLGTLLVLFLSAIILVA. Residue cysteine 20 is the site of N-palmitoyl cysteine attachment. Cysteine 20 is lipidated: S-diacylglycerol cysteine. Residues histidine 67, histidine 139, glutamate 205, and aspartate 280 each contribute to the Mn(2+) site.

The protein belongs to the bacterial solute-binding protein 9 family. Lipoprotein receptor antigen (Lrai) subfamily.

It localises to the cell membrane. Its function is as follows. Part of the ATP-binding cassette (ABC) transport system PsaABC involved in manganese import. Binds manganese with high affinity and specificity and delivers it to the membrane permease for translocation into the cytoplasm. Also acts as an adhesin which is involved on adherence to extracellular matrix. It is an important factor in pathogenesis and infection. The sequence is that of Manganese ABC transporter substrate-binding lipoprotein PsaA (psaA) from Streptococcus pneumoniae serotype 4 (strain ATCC BAA-334 / TIGR4).